A 190-amino-acid polypeptide reads, in one-letter code: uncharacterized protein (190 aa).

The signal sequence occupies residues 1–18 (MKLVHMASGLAVAIALAA). A lipid anchor (N-palmitoyl cysteine) is attached at C19. C19 carries the S-diacylglycerol cysteine lipid modification. Over residues 162 to 182 (ASGGATTTVPSTSPTQVNPSS) the composition is skewed to low complexity. The tract at residues 162–190 (ASGGATTTVPSTSPTQVNPSSAVPAPTQY) is disordered.

It is found in the cell membrane. This is an uncharacterized protein from Escherichia coli (strain K12).